The sequence spans 384 residues: Succinyl-diaminopimelate desuccinylase (384 aa).

His-73 serves as a coordination point for Zn(2+). Residue Asp-75 is part of the active site. Residue Asp-106 participates in Zn(2+) binding. Glu-140 acts as the Proton acceptor in catalysis. Glu-141, Glu-169, and His-358 together coordinate Zn(2+).

Belongs to the peptidase M20A family. DapE subfamily. Homodimer. Zn(2+) is required as a cofactor. The cofactor is Co(2+).

It catalyses the reaction N-succinyl-(2S,6S)-2,6-diaminopimelate + H2O = (2S,6S)-2,6-diaminopimelate + succinate. The protein operates within amino-acid biosynthesis; L-lysine biosynthesis via DAP pathway; LL-2,6-diaminopimelate from (S)-tetrahydrodipicolinate (succinylase route): step 3/3. Functionally, catalyzes the hydrolysis of N-succinyl-L,L-diaminopimelic acid (SDAP), forming succinate and LL-2,6-diaminopimelate (DAP), an intermediate involved in the bacterial biosynthesis of lysine and meso-diaminopimelic acid, an essential component of bacterial cell walls. The sequence is that of Succinyl-diaminopimelate desuccinylase from Pelagibacter ubique (strain HTCC1062).